The following is a 76-amino-acid chain: UPF0346 protein LBA0976 (76 aa).

It belongs to the UPF0346 family.

The polypeptide is UPF0346 protein LBA0976 (Lactobacillus acidophilus (strain ATCC 700396 / NCK56 / N2 / NCFM)).